We begin with the raw amino-acid sequence, 412 residues long: Tyrosine--tRNA ligase (412 aa).

Position 31 (tyrosine 31) interacts with L-tyrosine. A 'HIGH' region motif is present at residues 36–45 (PTAPSLHIGH). L-tyrosine-binding residues include tyrosine 162 and glutamine 166. A 'KMSKS' region motif is present at residues 222–226 (KIGKT). Lysine 225 contacts ATP. Residues 345–411 (KRWLDIVVEL…GKRKKQVIDL (67 aa)) form the S4 RNA-binding domain.

Belongs to the class-I aminoacyl-tRNA synthetase family. TyrS type 1 subfamily. As to quaternary structure, homodimer.

It localises to the cytoplasm. The enzyme catalyses tRNA(Tyr) + L-tyrosine + ATP = L-tyrosyl-tRNA(Tyr) + AMP + diphosphate + H(+). Catalyzes the attachment of tyrosine to tRNA(Tyr) in a two-step reaction: tyrosine is first activated by ATP to form Tyr-AMP and then transferred to the acceptor end of tRNA(Tyr). In Chlamydia trachomatis serovar A (strain ATCC VR-571B / DSM 19440 / HAR-13), this protein is Tyrosine--tRNA ligase.